Consider the following 373-residue polypeptide: UDP-sugar transporter UST74c (373 aa).

The disordered stretch occupies residues 27-49; it reads LEEKMGGSADRSSLLDGSGSKEL. Ser50 bears the Phosphoserine mark. Transmembrane regions (helical) follow at residues 89–111, 131–153, 174–196, 206–225, 238–260, 275–297, 302–324, and 329–351; these read HFPS…LGMG, FPLP…TLSL, ILGL…GALL, MRGY…NGVY, YGLM…YVTG, VFVV…TILC, SALT…GMFI, and VFSW…YTYV.

It belongs to the TPT transporter family. SLC35D subfamily.

The protein localises to the golgi apparatus membrane. Involved in the import of UDP-sugars from the cytoplasm into the Golgi lumen. In Drosophila melanogaster (Fruit fly), this protein is UDP-sugar transporter UST74c (frc).